Consider the following 512-residue polypeptide: tRNA-2-methylthio-N(6)-dimethylallyladenosine synthase (512 aa).

Residues 1 to 22 form a disordered region; it reads MVAHDAAAGVTGEGAGPPVRRA. One can recognise an MTTase N-terminal domain in the interval 25–141; that stretch reads RTYQVRTYGC…LPTLLERARH (117 aa). 6 residues coordinate [4Fe-4S] cluster: Cys34, Cys70, Cys104, Cys178, Cys182, and Cys185. In terms of domain architecture, Radical SAM core spans 164 to 400; it reads RESAYAAWVS…IALQEQISLE (237 aa). One can recognise a TRAM domain in the interval 403 to 471; that stretch reads RALVGQAVEV…PHHLIADAGV (69 aa).

The protein belongs to the methylthiotransferase family. MiaB subfamily. As to quaternary structure, monomer. [4Fe-4S] cluster serves as cofactor.

It localises to the cytoplasm. The catalysed reaction is N(6)-dimethylallyladenosine(37) in tRNA + (sulfur carrier)-SH + AH2 + 2 S-adenosyl-L-methionine = 2-methylsulfanyl-N(6)-dimethylallyladenosine(37) in tRNA + (sulfur carrier)-H + 5'-deoxyadenosine + L-methionine + A + S-adenosyl-L-homocysteine + 2 H(+). Its function is as follows. Catalyzes the methylthiolation of N6-(dimethylallyl)adenosine (i(6)A), leading to the formation of 2-methylthio-N6-(dimethylallyl)adenosine (ms(2)i(6)A) at position 37 in tRNAs that read codons beginning with uridine. The protein is tRNA-2-methylthio-N(6)-dimethylallyladenosine synthase of Mycobacterium bovis (strain ATCC BAA-935 / AF2122/97).